Here is a 283-residue protein sequence, read N- to C-terminus: Acetyl-coenzyme A carboxylase carboxyl transferase subunit beta (283 aa).

Residues Val27–Lys283 enclose the CoA carboxyltransferase N-terminal domain. The Zn(2+) site is built by Cys31, Cys34, Cys50, and Cys53. The C4-type zinc finger occupies Cys31–Cys53.

This sequence belongs to the AccD/PCCB family. In terms of assembly, acetyl-CoA carboxylase is a heterohexamer composed of biotin carboxyl carrier protein (AccB), biotin carboxylase (AccC) and two subunits each of ACCase subunit alpha (AccA) and ACCase subunit beta (AccD). Zn(2+) serves as cofactor.

The protein resides in the cytoplasm. It carries out the reaction N(6)-carboxybiotinyl-L-lysyl-[protein] + acetyl-CoA = N(6)-biotinyl-L-lysyl-[protein] + malonyl-CoA. It functions in the pathway lipid metabolism; malonyl-CoA biosynthesis; malonyl-CoA from acetyl-CoA: step 1/1. Functionally, component of the acetyl coenzyme A carboxylase (ACC) complex. Biotin carboxylase (BC) catalyzes the carboxylation of biotin on its carrier protein (BCCP) and then the CO(2) group is transferred by the transcarboxylase to acetyl-CoA to form malonyl-CoA. This chain is Acetyl-coenzyme A carboxylase carboxyl transferase subunit beta, found in Pelotomaculum thermopropionicum (strain DSM 13744 / JCM 10971 / SI).